A 499-amino-acid chain; its full sequence is Interferon regulatory factor 5 (499 aa).

The Nuclear localization signal signature appears at 12–18; the sequence is PRRVRLK. Residues 14–122 constitute a DNA-binding region (IRF tryptophan pentad repeat); the sequence is RVRLKPWLVA…QPYKVYEVCS (109 aa). Positions 121–142 are disordered; that stretch reads CSNGPAPAESQPSEDNAEEEEE. Positions 145-155 match the Nuclear export signal motif; that stretch reads LQKMLPGLSIT. A phosphoserine; by TBK1 mark is found at serine 153 and serine 294. At serine 302 the chain carries Phosphoserine. Residues lysine 412 and lysine 413 each participate in a glycyl lysine isopeptide (Lys-Gly) (interchain with G-Cter in ubiquitin) cross-link. Residues serine 432, serine 436, serine 438, serine 441, and serine 447 each carry the phosphoserine modification.

The protein belongs to the IRF family. In terms of assembly, homodimer, when phosphorylated. Interacts with TASL (via pLxIS motif); interaction takes place downstream of TLR7, TLR8 or TLR9, leading to its activation. Interacts with MYD88 and TRAF6. Post-translationally, phosphorylation of serine and threonine residues by IKBKB in a C-terminal autoinhibitory region, stimulates dimerization, transport into the nucleus, assembly with the coactivator CBP/EP300 and initiation of transcription. In terms of processing, 'Lys-63'-linked polyubiquitination by TRAF6 is required for activation.

It is found in the cytoplasm. The protein resides in the nucleus. Its activity is regulated as follows. Maintained as a monomer in an autoinhibited state. Phosphorylation and activation follow the following steps: innate adapter protein TASL recruits IRF5, thereby licensing IRF5 for phosphorylation by IKBKB. Phosphorylated IRF5 dissociates from the adapter proteins, dimerizes, and then enters the nucleus to induce IFNs. Its function is as follows. Transcription factor that plays a critical role in innate immunity by activating expression of type I interferon (IFN) IFNA and INFB and inflammatory cytokines downstream of endolysosomal toll-like receptors TLR7, TLR8 and TLR9. Regulates the transcription of type I IFN genes (IFN-alpha and IFN-beta) and IFN-stimulated genes (ISG) by binding to an interferon-stimulated response element (ISRE) in their promoters. Can efficiently activate both the IFN-beta (IFNB) and the IFN-alpha (IFNA) genes and mediate their induction downstream of the TLR-activated, MyD88-dependent pathway. The protein is Interferon regulatory factor 5 of Bos taurus (Bovine).